The chain runs to 365 residues: Synapse-associated protein 1 (365 aa).

The tract at residues 1-65 (MFGGLSSWLG…QPPTEDPQFL (65 aa)) is disordered. A compositionally biased stretch (low complexity) spans 52-62 (EQQQQPPTEDP). The 53-residue stretch at 172 to 224 (VQFNFDFDQMYPVALVMLQEDELLSKMRFALVPKLVKEEVFWRNYFYRISLIK) folds into the BSD domain. A disordered region spans residues 237-259 (QASGKEEKSSNRDDNLPLTEAVR). Over residues 240 to 251 (GKEEKSSNRDDN) the composition is skewed to basic and acidic residues. Thr262 carries the phosphothreonine modification. Phosphoserine is present on residues Ser283, Ser298, and Ser327. Residues 344–365 (VAESEKRDENWDKEIEKMLQES) are disordered. Over residues 346-365 (ESEKRDENWDKEIEKMLQES) the composition is skewed to basic and acidic residues.

In terms of assembly, interacts (via phosphorylated form and BSD domain) with AKT1; this interaction is enhanced in a mTORC2-mediated manner in response to epidermal growth factor (EGF) stimulation and activates AKT1. Phosphorylated. Phosphorylation increases in a mTORC2-mediated manner in response to epidermal growth factor (EGF) stimulation. As to expression, expressed in the liver, kidney, skeletal muscle and in white and brown adipose tissues. Expressed in the cortex, cerebellum, thalamus, hippocampus, braistem, olfactory bulb, spinal cord and striatum of the brain. Expressed in most neuropil regions containing glutamatergic synaptic terminals. Expressed in the CA1, CA2 and CA3 perikarya of the hippocampus. Expressed in neurons and Purkinje cells (at the protein level).

The protein resides in the cytoplasm. Its subcellular location is the perinuclear region. It is found in the golgi apparatus. The protein localises to the perikaryon. It localises to the cell projection. The protein resides in the axon. Its subcellular location is the dendrite. It is found in the growth cone. The protein localises to the presynaptic cell membrane. It localises to the postsynaptic cell membrane. The protein resides in the membrane. Plays a role in adipocyte differentiation by promoting mTORC2-mediated phosphorylation of AKT1 at 'Ser-473' after growth factor stimulation. In Mus musculus (Mouse), this protein is Synapse-associated protein 1.